A 199-amino-acid polypeptide reads, in one-letter code: Probable nicotinate-nucleotide adenylyltransferase (199 aa).

The protein belongs to the NadD family.

It catalyses the reaction nicotinate beta-D-ribonucleotide + ATP + H(+) = deamido-NAD(+) + diphosphate. It functions in the pathway cofactor biosynthesis; NAD(+) biosynthesis; deamido-NAD(+) from nicotinate D-ribonucleotide: step 1/1. In terms of biological role, catalyzes the reversible adenylation of nicotinate mononucleotide (NaMN) to nicotinic acid adenine dinucleotide (NaAD). The sequence is that of Probable nicotinate-nucleotide adenylyltransferase from Roseiflexus castenholzii (strain DSM 13941 / HLO8).